The primary structure comprises 699 residues: Cell pattern formation-associated protein StuA (699 aa).

Disordered regions lie at residues 1 to 20 (MDGTPSSGPPRVEAPHLLAP) and 31 to 97 (TPQF…QPEH). Residues 32–49 (PQFKSQQSQPQSQSQYPS) show a composition bias toward low complexity. Over residues 52-61 (NPDSYSSSSP) the composition is skewed to polar residues. Over residues 75-84 (EDGEDYDQEE) the composition is skewed to acidic residues. In terms of domain architecture, HTH APSES-type spans 226 to 332 (RVTATLWEDE…HNIGALLYHP (107 aa)). Positions 260-281 (GTKLLNVAGMTRGRRDGILKSE) form a DNA-binding region, H-T-H motif. 3 disordered regions span residues 372–594 (AMPT…MNSM), 599–618 (RRDDEAETPRPGPNMNDLNN), and 674–699 (PSYPAGPGYELARPVTNVPRRQQSFG). Positions 376–423 (GYTSQQPLTNGHQSMANTPQPLTNGSQPPMNGSQTPMNGPQPPMQNGG) are enriched in polar residues. Composition is skewed to basic and acidic residues over residues 428 to 438 (RVREDDDDLHR) and 478 to 491 (GLKRGREEHDDMHR). Polar residues predominate over residues 520-529 (NLHQPLSNGD). Residues 535 to 545 (RGRDDDDDVHR) are compositionally biased toward basic and acidic residues. The span at 566–594 (TSTSNDMLPQSPYYTLSNGAYQGPMMNSM) shows a compositional bias: polar residues. Residues 669 to 695 (TVAVSPSYPAGPGYELARPVTNVPRRQ) form a nuclear localization domain region.

This sequence belongs to the EFG1/PHD1/stuA family.

It is found in the nucleus. Transcription factor that regulates asexual reproduction. Binds the StuA-response elements (StRE) with the consensus sequence 5'-(A/T)CGCG(T/A)N(A/C)-3' at the promoters of target genes. Controls the expression of the gene clusters involved in the production of deoxynivalenol (DON) and 15-acetyldeoxynivalenol (15ADON). Regulates the expression of genes involved in chitin and glucan metabolism. Also controls catalase activity and cell surface hydrophobicity. Plays an important role in pathogenicity. This is Cell pattern formation-associated protein StuA from Gibberella zeae (strain ATCC MYA-4620 / CBS 123657 / FGSC 9075 / NRRL 31084 / PH-1) (Wheat head blight fungus).